Here is a 32-residue protein sequence, read N- to C-terminus: Cytochrome b6-f complex subunit 7 (32 aa).

Residues 9–27 (AAVFWVLIPVGLLGGVLLL) form a helical membrane-spanning segment.

It belongs to the PetM family. As to quaternary structure, the 4 large subunits of the cytochrome b6-f complex are cytochrome b6, subunit IV (17 kDa polypeptide, PetD), cytochrome f and the Rieske protein, while the 4 small subunits are PetG, PetL, PetM and PetN. The complex functions as a dimer.

Its subcellular location is the cellular thylakoid membrane. Its function is as follows. Component of the cytochrome b6-f complex, which mediates electron transfer between photosystem II (PSII) and photosystem I (PSI), cyclic electron flow around PSI, and state transitions. The chain is Cytochrome b6-f complex subunit 7 from Prochlorococcus marinus (strain NATL1A).